The sequence spans 126 residues: Methylglyoxal synthase (126 aa).

Positions 1–126 (MAGGKCIALI…AERLIKTLNH (126 aa)) constitute an MGS-like domain. Substrate-binding positions include histidine 12, lysine 16, 38-41 (TGTT), and 59-60 (SG). Aspartate 65 (proton donor/acceptor) is an active-site residue. Histidine 92 contacts substrate.

Belongs to the methylglyoxal synthase family.

The catalysed reaction is dihydroxyacetone phosphate = methylglyoxal + phosphate. In terms of biological role, catalyzes the formation of methylglyoxal from dihydroxyacetone phosphate. This Rhizobium rhizogenes (strain K84 / ATCC BAA-868) (Agrobacterium radiobacter) protein is Methylglyoxal synthase.